Reading from the N-terminus, the 82-residue chain is Conotoxin Gla-TxX (82 aa).

The signal sequence occupies residues 1–25; sequence MSGHTSVSFLLLSIVALGMVATVIC. 4-carboxyglutamate is present on residues Glu30, Glu34, Glu37, Glu40, and Glu41. Residue Asn72 is modified to Asparagine amide. Residues 77–82 constitute a propeptide that is removed on maturation; it reads LIHMQK.

Contains 4 disulfide bonds. Expressed by the venom duct.

It is found in the secreted. This chain is Conotoxin Gla-TxX, found in Conus textile (Cloth-of-gold cone).